Consider the following 450-residue polypeptide: Vimentin beta (450 aa).

The tract at residues 1–81 is head; that stretch reads MSSRTSTSSY…FGLADAINTE (81 aa). The segment covering 24-38 has biased composition (polar residues); it reads STYSSRQYSSPGRTT. The interval 24 to 56 is disordered; it reads STYSSRQYSSPGRTTSRVSYSSASSTSPSLYMS. Over residues 39-56 the composition is skewed to low complexity; the sequence is SRVSYSSASSTSPSLYMS. Residues 82 to 117 form a coil 1A region; sequence FKANRTNEKAEMQHVNDRFASYIEEVRFLEQQNKIL. Positions 89–397 constitute an IF rod domain; that stretch reads EKAEMQHVND…NLLEGEEYRI (309 aa). Residues 118 to 139 are linker 1; it reads TAELEQMRGKGSSRVGDLYEDE. The coil 1B stretch occupies residues 140 to 231; sequence MRELRRQVDQ…KLHDEELAEL (92 aa). The linker 12 stretch occupies residues 232-254; sequence QMQIQERHVQIDMEVAKPDLTAA. Positions 255–393 are coil 2; that stretch reads LRDVRQQYET…ATYRNLLEGE (139 aa). Residues 394–450 are tail; it reads EYRITTPFPNLSSLSLRESMKEIRPAMDSLSKKVVIKTIETRDGHIINQSTQKDNLE.

Belongs to the intermediate filament family. As to quaternary structure, homomer. Post-translationally, one of the most prominent phosphoproteins in various cells of mesenchymal origin. Phosphorylation is enhanced during cell division, at which time vimentin filaments are significantly reorganized. In terms of tissue distribution, expressed in low amounts in retina, optic nerve, brain, and spinal cord and in very high amounts in eye lens.

Vimentins are class-III intermediate filaments found in various non-epithelial cells, especially mesenchymal cells. Vimentin is attached to the nucleus, endoplasmic reticulum, and mitochondria, either laterally or terminally. The protein is Vimentin beta of Carassius auratus (Goldfish).